A 240-amino-acid polypeptide reads, in one-letter code: Zein-alpha M6 (240 aa).

Residues 1–21 (MATKIFSLLMLLALSTCVANA) form the signal peptide.

It belongs to the zein family.

Zeins are major seed storage proteins. This is Zein-alpha M6 from Zea mays (Maize).